Here is a 73-residue protein sequence, read N- to C-terminus: Putative membrane protein insertion efficiency factor (73 aa).

It belongs to the UPF0161 family.

The protein resides in the cell inner membrane. Could be involved in insertion of integral membrane proteins into the membrane. The sequence is that of Putative membrane protein insertion efficiency factor from Rickettsia bellii (strain OSU 85-389).